Reading from the N-terminus, the 590-residue chain is Histone-binding protein N1/N2 (590 aa).

The disordered stretch occupies residues 1-30 (MAEETAALSTEKTEDTSTAPSTSAEKADGI). Residues 36 to 69 (AKRLMGAGQKHLVMKDVRSAVNLFQEASSLLAKQ) form a TPR 1 repeat. The tract at residues 102 to 328 (ALEGMPEDDE…EKETEEEDVG (227 aa)) is disordered. Over residues 106–120 (MPEDDEEEAEKEEDP) the composition is skewed to acidic residues. Composition is skewed to basic and acidic residues over residues 128 to 250 (LDEK…DAKE) and 262 to 275 (AEEKMDSEASESKE). Residues 293–327 (EKMEEEEEGEDSEENEDGTEENEGTEEKETEEEDV) show a composition bias toward acidic residues. 2 TPR repeats span residues 357-390 (AQAHQKLGEVCIESENYSQAVEDFLACLNIQKEH) and 399-432 (AETHYHLGLAYQYSSKHEEAISHFTQSIGVIEKR). The disordered stretch occupies residues 492–590 (GGSSGFSKEN…METATVESTA (99 aa)). Residues 496–525 (GFSKENGSTSSSSAVEKSGDSTVPVTNCVS) are compositionally biased toward polar residues. The Nuclear localization signal motif lies at 531–537 (VRKKRKT). The span at 536-553 (KTEEESPLKDKDAKKSKQ) shows a compositional bias: basic and acidic residues.

The protein belongs to the NASP family.

The protein localises to the nucleus. Functionally, this protein is involved in nucleosome assembly. It is bound to H3 and H4 in the absence of DNA, but released from H3 and H4 in the presence of DNA. This is Histone-binding protein N1/N2 from Xenopus laevis (African clawed frog).